Reading from the N-terminus, the 474-residue chain is ATP-dependent rRNA helicase RRP3 (474 aa).

Residues methionine 1–serine 10 are compositionally biased toward basic residues. The tract at residues methionine 1 to glutamate 43 is disordered. The span at aspartate 24–proline 36 shows a compositional bias: polar residues. Residues lysine 48–alanine 76 carry the Q motif motif. The Helicase ATP-binding domain occupies isoleucine 79 to valine 250. ATP is bound at residue alanine 92 to threonine 99. Residues aspartate 198–aspartate 201 carry the DEAD box motif. Positions tyrosine 278 to methionine 422 constitute a Helicase C-terminal domain. The interval leucine 442–glycine 474 is disordered. The segment covering lysine 448–lysine 463 has biased composition (basic residues). Basic and acidic residues predominate over residues arginine 464–glycine 474.

Belongs to the DEAD box helicase family. DDX47/RRP3 subfamily. Interacts with the SSU processome.

The protein resides in the nucleus. It carries out the reaction ATP + H2O = ADP + phosphate + H(+). Functionally, ATP-dependent rRNA helicase required for pre-ribosomal RNA processing. Involved in the maturation of the 35S-pre-rRNA and to its cleavage to mature 18S rRNA. The sequence is that of ATP-dependent rRNA helicase RRP3 from Coccidioides immitis (strain RS) (Valley fever fungus).